Reading from the N-terminus, the 145-residue chain is Bacilliredoxin SAR1441 (145 aa).

Belongs to the bacilliredoxin family.

This is Bacilliredoxin SAR1441 from Staphylococcus aureus (strain MRSA252).